The chain runs to 896 residues: Desmocollin-3 (896 aa).

An N-terminal signal peptide occupies residues 1–27 (MAAAGPRRSVRGAVCLHLLLTLVIFSR). Residues 28-135 (AGEACKKVIL…RETVLRRAKR (108 aa)) constitute a propeptide that is removed on maturation. Cadherin domains lie at 136 to 243 (RWAP…HPVF), 244 to 355 (TEAI…APTF), 356 to 471 (RQNA…GPEC), 472 to 579 (TPAA…EILQ), and 580 to 690 (EYVV…ILGK). At 136-690 (RWAPIPCSMQ…SRSTGVILGK (555 aa)) the chain is on the extracellular side. N-linked (GlcNAc...) asparagine glycosylation is present at N166. N-linked (GlcNAc...) asparagine glycans are attached at residues N392, N546, and N629. A helical transmembrane segment spans residues 691–711 (WAILAILLGIALLFSVLLTLV). Residues 712–896 (CGVFGATKGK…ITLAEACTKR (185 aa)) lie on the Cytoplasmic side of the membrane.

In terms of assembly, may form homodimers. Interacts with DSG1; there is evidence to suggest that the interaction promotes cell-cell adhesion of keratinocytes. Expressed throughout the basal and spinous layer of the epidermis with weak expression in the granular layer (at protein level). Also expressed in the buccal mucosa, esophagus and cervix (at protein level).

The protein resides in the cell membrane. It is found in the cell junction. It localises to the desmosome. The protein localises to the cytoplasm. A component of desmosome cell-cell junctions which are required for positive regulation of cellular adhesion. Required for cell-cell adhesion in the epidermis, as a result required for the maintenance of the dermal cohesion and the dermal barrier function. Required for cell-cell adhesion of epithelial cell layers surrounding the telogen hair club, as a result plays an important role in telogen hair shaft anchorage. Essential for successful completion of embryo compaction and embryo development. The chain is Desmocollin-3 (DSC3) from Homo sapiens (Human).